Consider the following 948-residue polypeptide: Zinc finger CCCH domain-containing protein 18 (948 aa).

M1 bears the N-acetylmethionine mark. The interval 1–219 (MDVAESPELD…SDRKVRPRPT (219 aa)) is disordered. Phosphoserine is present on S6. The segment covering 15 to 25 (EDEEQPALSDD) has biased composition (acidic residues). Residues S33, S45, S58, S64, S71, S75, S80, and S92 each carry the phosphoserine modification. Basic and acidic residues predominate over residues 70–86 (ASEPKSQDQDSEAHELS). Positions 95–105 (EEGDDVEEDGT) are enriched in acidic residues. Residue T105 is modified to Phosphothreonine. Residues S106 and S114 each carry the phosphoserine modification. Residues 106-120 (SDLRDEASSVTRELD) show a composition bias toward basic and acidic residues. Composition is skewed to acidic residues over residues 121–132 (EHELDYDEEVPE) and 139–154 (QEEEAEKAGAEEEEEK). S169 carries the post-translational modification Phosphoserine. Residues 177–186 (EAAKEKKKED) are compositionally biased toward basic and acidic residues. Residues 187–203 (DDGEIDDGEIDDDDLEE) are compositionally biased toward acidic residues. Residues 204 to 213 (GEVKDPSDRK) show a composition bias toward basic and acidic residues. The C3H1-type zinc finger occupies 215–241 (RPRPTCRFFMKGNCTWGMSCRFIHPGV). G245 carries the omega-N-methylarginine modification. Disordered regions lie at residues 272 to 296 (ANPWGGPVVDEILPPPPPEPPTESA) and 388 to 922 (YTEA…TLSR). A compositionally biased stretch (basic and acidic residues) spans 392–480 (EPYHNYRERE…DREKDKEKPK (89 aa)). A coiled-coil region spans residues 395 to 460 (HNYRERERER…RERAKRDEKD (66 aa)). S483 is modified (phosphoserine). Residue K506 forms a Glycyl lysine isopeptide (Lys-Gly) (interchain with G-Cter in SUMO2) linkage. The span at 506–516 (KRADEWKDPWR) shows a compositional bias: basic and acidic residues. A phosphoserine mark is found at S528, S530, and S532. The segment covering 541-602 (SASSASASNS…SRSRSFSSSP (62 aa)) has biased composition (low complexity). The segment covering 603-612 (SPSPTPSPHR) has biased composition (pro residues). Glycyl lysine isopeptide (Lys-Gly) (interchain with G-Cter in SUMO2) cross-links involve residues K618 and K657. The segment covering 657-666 (KPGDLREARR) has biased composition (basic and acidic residues). Low complexity-rich tracts occupy residues 688-721 (GSSYSGSSSRSRSLSVSSVSSVSSATSSSSSVHS) and 732-746 (ASPVSSASSRSPTPA). A compositionally biased stretch (basic and acidic residues) spans 756-770 (KKEDGVREEKRRRDP). Positions 774-804 (PPKSSKAPAGGKASQQAAAPQPAVPGQPQQG) are enriched in low complexity. K810 carries the post-translational modification N6-acetyllysine. A Glycyl lysine isopeptide (Lys-Gly) (interchain with G-Cter in SUMO2) cross-link involves residue K813. Residues 820 to 837 (AADKGSRKRYEPSDKDRQ) show a composition bias toward basic and acidic residues. A phosphoserine mark is found at S838, S847, S863, S888, and S891. Residues 888–898 (SPQSKGSSKVT) are compositionally biased toward polar residues. The segment covering 902 to 919 (GKATDTATAGTKSGKAST) has biased composition (low complexity). K903 is covalently cross-linked (Glycyl lysine isopeptide (Lys-Gly) (interchain with G-Cter in SUMO2)). The stretch at 916-945 (KASTLSRREELLKQLKAVEDAIARKRAKIP) forms a coiled coil.

As to quaternary structure, interacts with ZFC3H1 in a RNase-insensitive manner.

The protein resides in the nucleus. This is Zinc finger CCCH domain-containing protein 18 (Zc3h18) from Mus musculus (Mouse).